Here is an 860-residue protein sequence, read N- to C-terminus: Pentatricopeptide repeat-containing protein At1g18900 (860 aa).

PPR repeat units follow at residues 363 to 397 (DGHTYTTMVGNLGRAKQFGAINKLLDEMVRDGCQP), 398 to 432 (NTVTYNRLIHSYGRANYLNEAMNVFNQMQEAGCKP), 433 to 467 (DRVTYCTLIDIHAKAGFLDIAMDMYQRMQAGGLSP), 468 to 502 (DTFTYSVIINCLGKAGHLPAAHKLFCEMVDQGCTP), 503 to 537 (NLVTYNIMMDLHAKARNYQNALKLYRDMQNAGFEP), 538 to 572 (DKVTYSIVMEVLGHCGYLEEAEAVFTEMQQKNWIP), 573 to 607 (DEPVYGLLVDLWGKAGNVEKAWQWYQAMLHAGLRP), and 608 to 642 (NVPTCNSLLSTFLRVNKIAEAYELLQNMLALGLRP). The Smr domain maps to 760-843 (INLHVMSEGT…NSGCFVGSGE (84 aa)).

This sequence belongs to the PPR family. P subfamily.

This is Pentatricopeptide repeat-containing protein At1g18900 from Arabidopsis thaliana (Mouse-ear cress).